We begin with the raw amino-acid sequence, 146 residues long: Protein archease (146 aa).

3 residues coordinate Ca(2+): Asp-16, Asp-145, and Ile-146.

Belongs to the archease family.

Functionally, activates the tRNA-splicing ligase complex by facilitating the enzymatic turnover of catalytic subunit RtcB. Acts by promoting the guanylylation of RtcB, a key intermediate step in tRNA ligation. Can also alter the NTP specificity of RtcB such that ATP, dGTP or ITP is used efficiently. This is Protein archease from Methanosarcina acetivorans (strain ATCC 35395 / DSM 2834 / JCM 12185 / C2A).